A 287-amino-acid polypeptide reads, in one-letter code: Orotidine 5'-phosphate decarboxylase (287 aa).

Residue K97 is the Proton donor of the active site.

The protein belongs to the OMP decarboxylase family. Type 2 subfamily.

The catalysed reaction is orotidine 5'-phosphate + H(+) = UMP + CO2. The protein operates within pyrimidine metabolism; UMP biosynthesis via de novo pathway; UMP from orotate: step 2/2. The protein is Orotidine 5'-phosphate decarboxylase of Clostridium perfringens (strain SM101 / Type A).